Here is a 295-residue protein sequence, read N- to C-terminus: UDP-N-acetylenolpyruvoylglucosamine reductase (295 aa).

The 166-residue stretch at 23–188 folds into the FAD-binding PCMH-type domain; the sequence is KVGGPADFLA…ISAKFALKPG (166 aa). Arg167 is an active-site residue. Catalysis depends on Ser217, which acts as the Proton donor. Glu287 is an active-site residue.

Belongs to the MurB family. FAD serves as cofactor.

The protein localises to the cytoplasm. It carries out the reaction UDP-N-acetyl-alpha-D-muramate + NADP(+) = UDP-N-acetyl-3-O-(1-carboxyvinyl)-alpha-D-glucosamine + NADPH + H(+). Its pathway is cell wall biogenesis; peptidoglycan biosynthesis. Functionally, cell wall formation. This is UDP-N-acetylenolpyruvoylglucosamine reductase from Streptococcus pyogenes serotype M6 (strain ATCC BAA-946 / MGAS10394).